The sequence spans 817 residues: Sorting nexin-29 (817 aa).

One can recognise an RUN domain in the interval 37–181 (SDSDSRVTCL…ILFAINIDNK (145 aa)). S269, S292, S293, S331, and S345 each carry phosphoserine. Residues 271–299 (DDEEDEQSSGDVFKKIPGAGESSEENSDR) are disordered. Disordered regions lie at residues 344 to 381 (KSID…LDAG) and 417 to 460 (APLG…LPSA). Acidic residues predominate over residues 347–358 (DDEDADENEDDV). A compositionally biased stretch (basic and acidic residues) spans 369-378 (GHSESPEKPL). Residues 445-460 (SPPGQESPLSSLLPSA) are compositionally biased toward low complexity. Position 451 is a phosphoserine (S451). The stretch at 466-546 (MTVSDLRQAI…VLKVQLKKYV (81 aa)) forms a coiled coil. S641 carries the phosphoserine modification. A Phosphothreonine modification is found at T643. Residues S644 and S648 each carry the phosphoserine modification. One can recognise a PX domain in the interval 658–781 (ALINVWIPSV…PFFVDITPPG (124 aa)). A disordered region spans residues 784–817 (LTKNSRPKVASRFPKLARGHPRETRNVEPQSGDL).

Belongs to the sorting nexin family.

In Bos taurus (Bovine), this protein is Sorting nexin-29 (SNX29).